We begin with the raw amino-acid sequence, 716 residues long: Zinc finger protein 840 (716 aa).

Residues Val-42–Pro-113 form the KRAB domain. C2H2-type zinc fingers lie at residues Tyr-151–His-173, Phe-207–His-229, Tyr-235–His-257, Phe-277–His-299, Tyr-305–His-327, His-333–His-355, Phe-361–His-383, Phe-389–His-411, Tyr-417–His-439, Phe-445–His-467, Tyr-473–His-495, Phe-501–His-523, Phe-549–His-571, Phe-577–His-599, Tyr-605–His-627, Phe-633–His-655, Tyr-661–His-683, and Phe-689–His-711. Residues Lys-515–Pro-548 form a disordered region.

The protein belongs to the krueppel C2H2-type zinc-finger protein family.

The protein resides in the nucleus. In terms of biological role, may be involved in transcriptional regulation. The protein is Zinc finger protein 840 (ZNF840P) of Homo sapiens (Human).